A 295-amino-acid polypeptide reads, in one-letter code: Protein U26 (295 aa).

8 helical membrane passes run 4–24, 31–51, 66–86, 103–123, 183–203, 218–238, 243–263, and 274–294; these read LTDS…LYTF, SPLG…LTFK, IVFL…VVMI, VMIM…SLFF, FTVE…FLSM, VFFK…ILSG, VCLY…SIML, and FYAG…MYFG.

The protein resides in the membrane. This chain is Protein U26 (U26), found in Human herpesvirus 6A (strain Uganda-1102) (HHV-6 variant A).